The chain runs to 77 residues: Metallothionein-like protein 2B (77 aa).

Belongs to the metallothionein superfamily. Type 15 family. In terms of tissue distribution, expressed in vascular tissues of all organs. Expressed in root and leaf phloem, pollen and root hairs.

In terms of biological role, metallothioneins have a high content of cysteine residues that bind various heavy metals. Functions as a metal chelator of copper (Cu) and zinc (Zn). Functions cooperatively with the phytochelatin synthase PCS1 to protect plants from Cu and cadmium toxicity. Plays a role in Cu homeostasis, specifically in the remobilization of Cu from senescing leaves. The mobilization of Cu from internal sources is important for seed development. In Arabidopsis thaliana (Mouse-ear cress), this protein is Metallothionein-like protein 2B (MT2B).